The following is a 266-amino-acid chain: Dickkopf-related protein 1 (266 aa).

Positions 1–31 (MMALGAAGATRVFVAMVAAALGGHPLLGVSA) are cleaved as a signal peptide. Serine 61 is a glycosylation site (O-linked (GalNAc...) serine). Intrachain disulfides connect cysteine 85–cysteine 97, cysteine 91–cysteine 111, cysteine 114–cysteine 128, cysteine 121–cysteine 133, cysteine 127–cysteine 138, cysteine 189–cysteine 201, cysteine 195–cysteine 210, cysteine 200–cysteine 237, cysteine 220–cysteine 245, and cysteine 239–cysteine 263. The segment at 85–138 (CAEDEECGTDEYCASPTRGGDAGVQICLACRKRRKRCMRHAMCCPGNYCKNGIC) is DKK-type Cys-1. Residues 189 to 263 (CLRSSDCASG…ASNSSRLHTC (75 aa)) form a DKK-type Cys-2 region. A glycan (N-linked (GlcNAc...) asparagine) is linked at asparagine 256.

The protein belongs to the dickkopf family. As to quaternary structure, interacts with LRP6. Interacts (via the C-terminal Cys-rich domain) with LRP5 (via beta-propeller regions 3 and 4); the interaction, enhanced by MESD and or KREMEN, antagonizes Wnt-mediated signaling. Forms a ternary complex with LRP6 and KREM1. Interacts with KREM1. As to expression, placenta.

It is found in the secreted. Antagonizes canonical Wnt signaling by inhibiting LRP5/6 interaction with Wnt and by forming a ternary complex with the transmembrane protein KREMEN that promotes internalization of LRP5/6. DKKs play an important role in vertebrate development, where they locally inhibit Wnt regulated processes such as antero-posterior axial patterning, limb development, somitogenesis and eye formation. In the adult, Dkks are implicated in bone formation and bone disease, cancer and Alzheimer disease. Inhibits the pro-apoptotic function of KREMEN1 in a Wnt-independent manner, and has anti-apoptotic activity. In Homo sapiens (Human), this protein is Dickkopf-related protein 1 (DKK1).